Consider the following 484-residue polypeptide: Ornithine decarboxylase (484 aa).

Lys114 is subject to N6-(pyridoxal phosphate)lysine. Pyridoxal 5'-phosphate-binding positions include Ser245, Gly282, and 315–318 (EPGR). Residue 381–382 (FD) participates in substrate binding. Cys422 acts as the Proton donor; shared with dimeric partner in catalysis. Asp423 provides a ligand contact to substrate. Residue Tyr452 coordinates pyridoxal 5'-phosphate.

It belongs to the Orn/Lys/Arg decarboxylase class-II family. Homodimer. Only the dimer is catalytically active, as the active sites are constructed of residues from both monomers. It depends on pyridoxal 5'-phosphate as a cofactor.

It is found in the cytoplasm. The catalysed reaction is L-ornithine + H(+) = putrescine + CO2. Its pathway is amine and polyamine biosynthesis; putrescine biosynthesis via L-ornithine pathway; putrescine from L-ornithine: step 1/1. Inhibited by antizyme (AZ) OAZ1 in response to polyamine levels. AZ inhibits the assembly of the functional homodimer by binding to ODC monomers and targeting them for ubiquitin-independent proteolytic destruction by the 26S proteasome. Catalyzes the first and rate-limiting step of polyamine biosynthesis that converts ornithine into putrescine, which is the precursor for the polyamines, spermidine and spermine. Polyamines are essential for cell proliferation and are implicated in cellular processes, ranging from DNA replication to apoptosis. This is Ornithine decarboxylase (spe-1) from Neurospora crassa (strain ATCC 24698 / 74-OR23-1A / CBS 708.71 / DSM 1257 / FGSC 987).